The chain runs to 183 residues: Phosphopantetheine adenylyltransferase (183 aa).

Substrate is bound at residue Ser-8. Residues 8–9 (SF) and His-16 each bind ATP. Substrate contacts are provided by Lys-40, Thr-72, and Arg-86. Residues 87–89 (GLR), Glu-97, and 122–128 (YSFLSSS) each bind ATP.

The protein belongs to the bacterial CoaD family. As to quaternary structure, homohexamer. Mg(2+) is required as a cofactor.

The protein resides in the cytoplasm. The enzyme catalyses (R)-4'-phosphopantetheine + ATP + H(+) = 3'-dephospho-CoA + diphosphate. Its pathway is cofactor biosynthesis; coenzyme A biosynthesis; CoA from (R)-pantothenate: step 4/5. In terms of biological role, reversibly transfers an adenylyl group from ATP to 4'-phosphopantetheine, yielding dephospho-CoA (dPCoA) and pyrophosphate. This Nostoc punctiforme (strain ATCC 29133 / PCC 73102) protein is Phosphopantetheine adenylyltransferase.